Here is a 214-residue protein sequence, read N- to C-terminus: Probable nicotinate-nucleotide adenylyltransferase (214 aa).

It belongs to the NadD family.

The enzyme catalyses nicotinate beta-D-ribonucleotide + ATP + H(+) = deamido-NAD(+) + diphosphate. Its pathway is cofactor biosynthesis; NAD(+) biosynthesis; deamido-NAD(+) from nicotinate D-ribonucleotide: step 1/1. Its function is as follows. Catalyzes the reversible adenylation of nicotinate mononucleotide (NaMN) to nicotinic acid adenine dinucleotide (NaAD). The protein is Probable nicotinate-nucleotide adenylyltransferase of Thermomicrobium roseum (strain ATCC 27502 / DSM 5159 / P-2).